Consider the following 883-residue polypeptide: Putative pentatricopeptide repeat-containing protein At1g13800 (883 aa).

PPR repeat units lie at residues 145-180, 181-215, 216-251, 253-285, 290-324, 325-359, 360-394, 395-429, 430-464, 465-499, 500-534, 537-561, 563-598, 599-633, 634-668, 697-731, 760-794, 795-829, and 830-864; these read LIRVSTALVKAYANLDMFDEAIDIFFRAYYSLGRAP, DIKALNFLISRMIASGRSDMVVGFFWEIERLGLDA, DAHTYVLVVQALWRNDDKEELEKLLSRLLISETRNP, VFYLNFIEGLCLNQMTDIAYFLLQPLRDANILV, LGIAYRKVVRGLCYEMRIEDAESVVLDMEKHGIDP, DVYVYSAIIEGHRKNMNIPKAVDVFNKMLKKRKRI, NCVIVSSILQCYCQMGNFSEAYDLFKEFRETNISL, DRVCYNVAFDALGKLGKVEEAIELFREMTGKGIAP, DVINYTTLIGGCCLQGKCSDAFDLMIEMDGTGKTP, DIVIYNVLAGGLATNGLAQEAFETLKMMENRGVKP, TYVTHNMVIEGLIDAGELDKAEAFYESLEHKSREN, SMVKGFCAAGCLDHAFERFIRLEFP, PKSVYFTLFTSLCAEKDYISKAQDLLDRMWKLGVEP, EKSMYGKLIGAWCRVNNVRKAREFFEILVTKKIVP, DLFTYTIMINTYCRLNEPKQAYALFEDMKRRDVKP, DVVYYTIMINRYCHLNDLKKVYALFKDMKRREIVP, DVFYYTVLIDWQCKIGDLGEAKRIFDQMIESGVDP, DAAPYTALIACCCKMGYLKEAKMIFDRMIESGVKP, and DVVPYTALIAGCCRNGFVLKAVKLVKEMLEKGIKP.

It belongs to the PPR family. P subfamily.

The polypeptide is Putative pentatricopeptide repeat-containing protein At1g13800 (Arabidopsis thaliana (Mouse-ear cress)).